A 583-amino-acid chain; its full sequence is MRQGHAPEESEPGCEAPCAGPCHAQRVLQALNAYRRSGTLTDVVLRAGGRDFPCHRAALSAGSAYFRSLFAAGRPERGPAVVPVVPVAPEAPGTSPAGAAAALAVVLDYVYGAGVRLRAEDEAAAVLALAERLGVAGLREACVRFLEGRLRAANSLALRRVAAAFSLAPLAERCGRVLRQAFAEVARHADFLELAPDEVVALLADPALGVAREEAVFEAAMRWVRHDAPARRGQLRRLLEHVRLPLLAPAYFLEKVEADELLQACGECRPLLLEARACFILGREAGALRTRPRRFMDLAEVIVVIGGCDRKGLLKLPFADAYHPESQRWTPLPSLPGYTRSEFAACALRNDVYVSGGHINSHDVWMFSSHLHTWIKVASLHKGRWRHKMAVVQGQLFAVGGFDGLRRLHSVERYDPFSNTWAAAAPLPEAVSSAAVASCAGKLFVIGGARQGGVNTDKVQCFDPKEDRWSLRSPAPFSQRCLEAVSLEDTIYVMGGLMSKIFTYDPGTDVWGEAAVLPSPVESCGVTVCDGKVHILGGRDDRGESTDKVFTFDPSSGQVEVQPSLQRCTSSHGCVTIIQSLGR.

In terms of domain architecture, BTB spans 41 to 119; that stretch reads TDVVLRAGGR…VYGAGVRLRA (79 aa). The region spanning 146 to 248 is the BACK domain; the sequence is LEGRLRAANS…LEHVRLPLLA (103 aa). 6 Kelch repeats span residues 301-350, 352-394, 395-441, 443-489, 490-531, and 533-579; these read VIVV…ALRN, VYVS…VVQG, QLFA…SCAG, LFVI…SLED, TIYV…VCDG, and VHIL…TIIQ.

This Homo sapiens (Human) protein is Kelch-like protein 35 (KLHL35).